The chain runs to 66 residues: Large ribosomal subunit protein bL35 (66 aa).

It belongs to the bacterial ribosomal protein bL35 family.

In Brucella canis (strain ATCC 23365 / NCTC 10854 / RM-666), this protein is Large ribosomal subunit protein bL35.